The chain runs to 333 residues: Low specificity L-threonine aldolase (333 aa).

K197 carries the N6-(pyridoxal phosphate)lysine modification.

This sequence belongs to the threonine aldolase family. In terms of assembly, homotetramer. Pyridoxal 5'-phosphate serves as cofactor.

The catalysed reaction is L-threonine = acetaldehyde + glycine. The enzyme catalyses L-allo-threonine = acetaldehyde + glycine. Its function is as follows. Catalyzes the cleavage of L-allo-threonine and L-threonine to glycine and acetaldehyde. L-threo-phenylserine and L-erythro-phenylserine are also good substrates. This Escherichia coli O157:H7 protein is Low specificity L-threonine aldolase (ltaE).